Reading from the N-terminus, the 345-residue chain is 3-isopropylmalate dehydrogenase (345 aa).

Residue 74 to 87 (GPKWDGLPRKISPE) coordinates NAD(+). Substrate is bound by residues arginine 94, arginine 104, arginine 132, and aspartate 217. Aspartate 217, aspartate 241, and aspartate 245 together coordinate Mg(2+). 274–286 (GSAPDIAGKGIAN) serves as a coordination point for NAD(+).

Belongs to the isocitrate and isopropylmalate dehydrogenases family. LeuB type 1 subfamily. In terms of assembly, homodimer. The cofactor is Mg(2+). Mn(2+) is required as a cofactor.

The protein resides in the cytoplasm. The enzyme catalyses (2R,3S)-3-isopropylmalate + NAD(+) = 4-methyl-2-oxopentanoate + CO2 + NADH. It participates in amino-acid biosynthesis; L-leucine biosynthesis; L-leucine from 3-methyl-2-oxobutanoate: step 3/4. Catalyzes the oxidation of 3-carboxy-2-hydroxy-4-methylpentanoate (3-isopropylmalate) to 3-carboxy-4-methyl-2-oxopentanoate. The product decarboxylates to 4-methyl-2 oxopentanoate. The chain is 3-isopropylmalate dehydrogenase (leuB) from Thermus thermophilus.